A 171-amino-acid polypeptide reads, in one-letter code: uncharacterized protein (171 aa).

Required for production of the bacteriocin SkfA. This is an uncharacterized protein from Bacillus subtilis (strain 168).